A 687-amino-acid polypeptide reads, in one-letter code: Phenylalanine aminomutase (L-beta-phenylalanine forming) (687 aa).

Catalysis depends on Tyr-80, which acts as the Proton donor/acceptor. Residues 175–177 constitute a cross-link (5-imidazolinone (Ala-Gly)); it reads ASG. Ser-176 carries the 2,3-didehydroalanine (Ser) modification. Residues Asn-231, Gln-319, Arg-325, Asn-355, Lys-427, Glu-455, and Asn-458 each coordinate (E)-cinnamate.

This sequence belongs to the PAL/histidase family. In terms of assembly, homodimer. Homotetramer, dimer of dimers. Post-translationally, contains an active site 4-methylidene-imidazol-5-one (MIO), which is formed autocatalytically by cyclization and dehydration of residues Ala-Ser-Gly.

The protein localises to the cytoplasm. The catalysed reaction is L-phenylalanine = L-beta-phenylalanine. It catalyses the reaction L-phenylalanine = (E)-cinnamate + NH4(+). It functions in the pathway alkaloid biosynthesis; taxol biosynthesis. It participates in phenylpropanoid metabolism; trans-cinnamate biosynthesis; trans-cinnamate from L-phenylalanine: step 1/1. Its function is as follows. Phenylalanine aminomutase that catalyzes the rearrangement of L-phenylalanine to R-beta-phenylalanine. Catalyzes the first committed step in the biosynthesis of the side chain of the alkaloid taxol (paclitaxel), a widely-used compound with antitumor activity. Also has low phenylalanine ammonia-lyase activity and can catalyze the amination of trans-cinnamate. The polypeptide is Phenylalanine aminomutase (L-beta-phenylalanine forming) (pam) (Taxus chinensis (Chinese yew)).